Consider the following 448-residue polypeptide: MSPQTETKASVGFKAGVKEYKLTYYTPDYETKDTDILAAFRVTPQPGVPPEKAGAAVAESSTGTWTTVWTDGFTSLDRYKGRCYHIEPVAGEENQYIAYVAYPLDLFEEGSVTNMFTSIVGNVFGFKALRALRLEDLRIPVAYVKTFQGPPHGIQVERDKLNKYGRPLLGCTIKPKLGLSAKNYGRAVYECLRGGLDFTKDDENVNSQPFMRWRDRFCFCAEALYKAQAETGEIKGHYLNATAGTCEEMIKRAVFARELGVPIVMHDYLTGGFTANTSLAHYCRDNGLLLHXHRAMHAVIDRQKNHGMPFRVLAKALRMSGGDHIHAGTVVGKLEGEREITLGFVDLLRDDFIEKDRSRGIYFTQDWVSLPGVIPVASGGIHVWHMPALTEIFGDDSVLQFGGGTLGHPWGNAPGAVANRVALEACVQARNEGRDLASEGNEIIREAS.

The propeptide occupies 1 to 2 (MS). The residue at position 3 (Pro-3) is an N-acetylproline. Lys-14 bears the N6,N6,N6-trimethyllysine mark. Asn-122 and Thr-172 together coordinate substrate. The Proton acceptor role is filled by Lys-174. Lys-176 provides a ligand contact to substrate. The Mg(2+) site is built by Lys-200, Asp-202, and Glu-203. An N6-carboxylysine modification is found at Lys-200. His-293 serves as the catalytic Proton acceptor. Substrate is bound by residues Arg-294, His-326, and Ser-378.

Belongs to the RuBisCO large chain family. Type I subfamily. In terms of assembly, heterohexadecamer of 8 large chains and 8 small chains; disulfide-linked. The disulfide link is formed within the large subunit homodimers. Mg(2+) serves as cofactor. In terms of processing, the disulfide bond which can form in the large chain dimeric partners within the hexadecamer appears to be associated with oxidative stress and protein turnover.

It is found in the plastid. Its subcellular location is the chloroplast. It catalyses the reaction 2 (2R)-3-phosphoglycerate + 2 H(+) = D-ribulose 1,5-bisphosphate + CO2 + H2O. The catalysed reaction is D-ribulose 1,5-bisphosphate + O2 = 2-phosphoglycolate + (2R)-3-phosphoglycerate + 2 H(+). Functionally, ruBisCO catalyzes two reactions: the carboxylation of D-ribulose 1,5-bisphosphate, the primary event in carbon dioxide fixation, as well as the oxidative fragmentation of the pentose substrate in the photorespiration process. Both reactions occur simultaneously and in competition at the same active site. The sequence is that of Ribulose bisphosphate carboxylase large chain from Dichapetalum crassifolium.